Reading from the N-terminus, the 168-residue chain is MDGAARAVSLFFRIAVVGLSVAAAVVMATASQAFPFNYGGAVSYTKYPAFVYFVVAAVVSAVCSAAALYLSVVREAAAGWAVALLDVVTMGLLFSAAGAVFAVRRMAPLYLGVAGADTVAGRWVNGEFCHAAGAFCWRVTTSAIICAFAAAAVSVAVLTKGARHRGKH.

At 1–6 (MDGAAR) the chain is on the cytoplasmic side. Residues 7–27 (AVSLFFRIAVVGLSVAAAVVM) form a helical membrane-spanning segment. The Extracellular portion of the chain corresponds to 28–49 (ATASQAFPFNYGGAVSYTKYPA). A helical membrane pass occupies residues 50 to 70 (FVYFVVAAVVSAVCSAAALYL). The Cytoplasmic segment spans residues 71–80 (SVVREAAAGW). Residues 81 to 101 (AVALLDVVTMGLLFSAAGAVF) form a helical membrane-spanning segment. The Extracellular segment spans residues 102–138 (AVRRMAPLYLGVAGADTVAGRWVNGEFCHAAGAFCWR). A helical transmembrane segment spans residues 139 to 159 (VTTSAIICAFAAAAVSVAVLT). Residues 160 to 168 (KGARHRGKH) lie on the Cytoplasmic side of the membrane.

It belongs to the Casparian strip membrane proteins (CASP) family. Homodimer and heterodimers.

It localises to the cell membrane. In Oryza sativa subsp. japonica (Rice), this protein is CASP-like protein 1U1.